Consider the following 462-residue polypeptide: MNAAHLSLAEHAARLRRRELTAVALIDTCAQHHARMEPRLNAYKTWDGARARSAAAAVDTLLDQGQDLGPLMGLPVSVKDLYGVPGLPVFAGSDEALPEAWQAAGPLVARLQRQLGIVVGKTHTVEFAFGGLGVNAHWGTPRNPWSPHEHRVPGGSSAGAGVSLVQGSALLALGTDTAGSVRVPASMTGQVGLKTTVGRWPVEGIVPLSSSLDTAGVLTRTVEDLAYAFAALDTESQGLPAPAPVRVQGLRVGVPTNHFWDDIDPSIAAAVEAAVQRLAQAGAQVVRFPLPHCEEAFDIFRRGGLAASELAAYLDQHFPHKVERLDPVVRDRVRWAEQVSSVEYLRRKAVLQRCGAGAARLFDDVDVLLTPTVPASPPRLADIGTVETYAPANMKAMRNTAISNLFGWCALTMPVGLDANRMPVGLQLMGPPRAEARLIGIALGIEALIGQGHALLGAPDLP.

Residues lysine 79 and serine 156 each act as charge relay system in the active site. Serine 180 functions as the Acyl-ester intermediate in the catalytic mechanism.

It belongs to the amidase family.

It carries out the reaction (2Z,4E)-2-aminomuconate + H2O = (3E)-2-oxohex-3-enedioate + NH4(+). The protein operates within xenobiotic degradation; nitrobenzene degradation. Its pathway is xenobiotic degradation; 4-chloronitrobenzene degradation. In terms of biological role, involved in the biodegradation of nitroaromatic and chlorinated nitroaromatic compounds. Catalyzes the conversion of 2-amino-5-chloromuconic acid into 2-hydroxy-5-chloromuconic acid and ammonia. Also able to catalyze the transformation of 2-aminomuconic acid into 2-hydroxymuconic acid. The sequence is that of 2-amino-5-chloromuconic acid deaminase from Comamonas testosteroni (Pseudomonas testosteroni).